Consider the following 78-residue polypeptide: MSRVCQVTGKRPAVGNNRSHAKNATKRRFLPNLQTHRFWVESEKRFVKLRLTAKGMRIIDKKGIDAVLVEIRARGENV.

The interval 1–25 (MSRVCQVTGKRPAVGNNRSHAKNAT) is disordered.

Belongs to the bacterial ribosomal protein bL28 family.

In Vibrio cholerae serotype O1 (strain ATCC 39541 / Classical Ogawa 395 / O395), this protein is Large ribosomal subunit protein bL28.